Consider the following 394-residue polypeptide: Elongation factor Tu (394 aa).

The region spanning 10 to 204 (KPHVNVGTIG…AVDEWIPTPE (195 aa)) is the tr-type G domain. Positions 19-26 (GHIDHGKT) are G1. 19-26 (GHIDHGKT) contributes to the GTP binding site. Residue threonine 26 coordinates Mg(2+). Residues 60 to 64 (GITIN) are G2. Residues 81-84 (DCPG) form a G3 region. Residues 81-85 (DCPGH) and 136-139 (NKCD) each bind GTP. The interval 136 to 139 (NKCD) is G4. The tract at residues 174–176 (SAL) is G5.

It belongs to the TRAFAC class translation factor GTPase superfamily. Classic translation factor GTPase family. EF-Tu/EF-1A subfamily. As to quaternary structure, monomer.

The protein localises to the cytoplasm. It catalyses the reaction GTP + H2O = GDP + phosphate + H(+). Its function is as follows. GTP hydrolase that promotes the GTP-dependent binding of aminoacyl-tRNA to the A-site of ribosomes during protein biosynthesis. The protein is Elongation factor Tu of Mycoplasma pneumoniae (strain ATCC 29342 / M129 / Subtype 1) (Mycoplasmoides pneumoniae).